A 305-amino-acid chain; its full sequence is Putative HTH-type transcriptional regulatory protein Saci_1344 (305 aa).

The region spanning 128–183 (LREKREEKNMSLGELSQRLGVSRISVYDYEKEDSYVSIEVAEKLIEIFGDEVIGDI) is the HTH cro/C1-type domain. Residues 139–158 (LGELSQRLGVSRISVYDYEK) constitute a DNA-binding region (H-T-H motif).

The sequence is that of Putative HTH-type transcriptional regulatory protein Saci_1344 from Sulfolobus acidocaldarius (strain ATCC 33909 / DSM 639 / JCM 8929 / NBRC 15157 / NCIMB 11770).